The following is a 1163-amino-acid chain: Rho GTPase-activating protein 45 (1163 aa).

The interval 1–99 is disordered; the sequence is MFSRKKRELM…KRPTSLSRHA (99 aa). 2 positions are modified to phosphoserine: Ser23 and Ser25. Basic and acidic residues predominate over residues 55-65; it reads LPKELPRKDGA. A phosphoserine mark is found at Ser100, Ser120, and Ser126. Disordered stretches follow at residues 118 to 137, 262 to 282, and 454 to 475; these read HRSP…GTGP, PPGD…EGTP, and EEEQ…LDKR. The 271-residue stretch at 296-566 folds into the F-BAR domain; that stretch reads EEVDVLLQRC…SSKLYDPGQQ (271 aa). A coiled-coil region spans residues 403 to 526; sequence EHEKRRKEIK…QIQEVIRQSD (124 aa). Low complexity predominate over residues 458–470; that stretch reads AGTAPGAGSTATK. 3 positions are modified to phosphoserine: Ser596, Ser605, and Ser619. Positions 610-695 are disordered; it reads DVAGPEAAGS…VDPEGGAGAS (86 aa). Positions 633-644 are enriched in basic residues; it reads KGHRAGRGHQVH. At Ser646 the chain carries Phosphoserine. A compositionally biased stretch (low complexity) spans 673 to 682; sequence TSSSGTMSST. The Phorbol-ester/DAG-type zinc finger occupies 729–774; that stretch reads THRLRKLRTPAKCRECNSYVYFQGAECEECCLACHKKCLETLAIQC. Residues 788–1001 enclose the Rho-GAP domain; it reads QDFSHAARSA…TLIVHYGLVF (214 aa). Residues Ser976, Ser1054, Ser1057, and Ser1059 each carry the phosphoserine modification. Disordered stretches follow at residues 1042–1067 and 1087–1163; these read AAED…ASEL and SEAS…PEFV. A compositionally biased stretch (low complexity) spans 1087–1099; it reads SEASLEEASGSHS. A compositionally biased stretch (polar residues) spans 1125-1137; the sequence is SGFNTNQSNNVLQ.

It localises to the cytoplasm. Its subcellular location is the cell projection. The protein resides in the ruffle membrane. Its function is as follows. Contains a GTPase activator for the Rho-type GTPases (RhoGAP) domain that would be able to negatively regulate the actin cytoskeleton as well as cell spreading. However, also contains N-terminally a BAR-domin which is able to play an autoinhibitory effect on this RhoGAP activity. The polypeptide is Rho GTPase-activating protein 45 (Pongo abelii (Sumatran orangutan)).